A 218-amino-acid polypeptide reads, in one-letter code: Thiopurine S-methyltransferase (218 aa).

Residues tryptophan 10, leucine 45, glutamate 66, and arginine 123 each contribute to the S-adenosyl-L-methionine site.

This sequence belongs to the class I-like SAM-binding methyltransferase superfamily. TPMT family.

The protein localises to the cytoplasm. It carries out the reaction S-adenosyl-L-methionine + a thiopurine = S-adenosyl-L-homocysteine + a thiopurine S-methylether.. The sequence is that of Thiopurine S-methyltransferase from Shewanella baltica (strain OS155 / ATCC BAA-1091).